The sequence spans 223 residues: Probable amino-acid ABC transporter permease protein PatM (223 aa).

The 192-residue stretch at 19–210 folds into the ABC transmembrane type-1 domain; it reads LGTTMEMATW…GVVVILTRVQ (192 aa). Helical transmembrane passes span 23 to 43, 59 to 78, 90 to 110, 156 to 176, and 186 to 206; these read MEMA…LANI, ISFF…YYGL, AFSA…AESI, FIDM…EIMA, and FRFF…VVIL.

The protein belongs to the binding-protein-dependent transport system permease family. HisMQ subfamily.

It localises to the cell inner membrane. Functionally, probably part of a binding-protein-dependent transport system for an amino acid. Probably responsible for the translocation of the substrate across the membrane. In Vibrio harveyi (Beneckea harveyi), this protein is Probable amino-acid ABC transporter permease protein PatM (patM).